A 1101-amino-acid polypeptide reads, in one-letter code: Error-prone DNA polymerase (1101 aa).

The tract at residues 1055–1101 is disordered; it reads ADLGHPMDSAVGQTTPQTDSAPRPRPQPRAMHPREQAKRLFPSRDFH. The span at 1065-1074 shows a compositional bias: polar residues; sequence VGQTTPQTDS. Residues 1086 to 1101 are compositionally biased toward basic and acidic residues; sequence HPREQAKRLFPSRDFH.

It belongs to the DNA polymerase type-C family. DnaE2 subfamily.

The protein localises to the cytoplasm. It catalyses the reaction DNA(n) + a 2'-deoxyribonucleoside 5'-triphosphate = DNA(n+1) + diphosphate. Functionally, DNA polymerase involved in damage-induced mutagenesis and translesion synthesis (TLS). It is not the major replicative DNA polymerase. The sequence is that of Error-prone DNA polymerase from Ruegeria pomeroyi (strain ATCC 700808 / DSM 15171 / DSS-3) (Silicibacter pomeroyi).